Here is a 266-residue protein sequence, read N- to C-terminus: Zinc finger protein SNAI2 (266 aa).

Residues Met-1–Gly-20 form an SNAG domain region. The disordered stretch occupies residues Ser-75–Leu-115. 4 consecutive C2H2-type zinc fingers follow at residues Phe-126–His-148, Phe-157–His-179, Cys-183–His-205, and Phe-211–His-233. Residues Tyr-239 to Cys-262 form a C2H2-type 5; atypical zinc finger.

This sequence belongs to the snail C2H2-type zinc-finger protein family. Interacts (via SNAG domain) with limd1 (via LIM domains), wtip (via LIM domains) and ajuba (via LIM domains). Interacts with elp3. As to expression, first expressed on the lateral side of stage 12 embryos. At stage 14, strongly expressed in the lateral neural folds. At stage 16, expressed in pre-migratory neural crest cells. At stage 18, expression is dispersed over the neural plate in a pattern surrounding the rhombomeres. At stage 22, expressed in neural crest derivatives, including the branchial arches and the tissues surrounding the eyes and forebrain. After stage 17, expression is weak in the lateral plate mesoderm, increasing at stage 26, but was down-regulated in the pronephros region at stage 26.

It localises to the nucleus. Its function is as follows. Probable transcriptional repressor. Acts downstream of snai1 in the specification of the neural crest and neural crest migration. In Xenopus laevis (African clawed frog), this protein is Zinc finger protein SNAI2 (snai2).